Reading from the N-terminus, the 396-residue chain is MAKEKFERTKPHVNIGTIGHVDHGKTTTTAAITKVLADAYPEENTAFAFDMIDKAPEEKERGITINISHVEYSTPKRHYAHVDAPGHADYIKNMITGAAQMDGAILVVAATDGPMPQTREHVLLARQVGVPYILVALNKCDMVDDEEIIELVEMEIRELLAEQDYDEEAPIVHISALKALEGDEKWVQSVIDLMQACDDSIPDPERELDKPFLMPIEDIFTITGRGTVVTGRVERGSLNVNEDIEIIGIKDKSMSTTVTGIEMFRKMMDYTEAGDNCGLLLRGTKREEVERGQVCIKPGAYTPHTKFEGSVYVLKKEEGGRHTPFMDNYRPQFYFRTTDVTGVIKLPEGTEMVMPGDNVEMSVELIQPVAMDEGLRFAIREGSRTVGAGRVTKILD.

The region spanning 10-205 is the tr-type G domain; sequence KPHVNIGTIG…ACDDSIPDPE (196 aa). The segment at 19–26 is G1; it reads GHVDHGKT. 19 to 26 serves as a coordination point for GTP; sequence GHVDHGKT. T26 serves as a coordination point for Mg(2+). Residues 62 to 66 form a G2 region; that stretch reads GITIN. The segment at 83–86 is G3; that stretch reads DAPG. Residues 83 to 87 and 138 to 141 contribute to the GTP site; these read DAPGH and NKCD. The interval 138–141 is G4; that stretch reads NKCD. The G5 stretch occupies residues 175–177; that stretch reads SAL.

The protein belongs to the TRAFAC class translation factor GTPase superfamily. Classic translation factor GTPase family. EF-Tu/EF-1A subfamily. In terms of assembly, monomer.

It localises to the cytoplasm. It carries out the reaction GTP + H2O = GDP + phosphate + H(+). In terms of biological role, GTP hydrolase that promotes the GTP-dependent binding of aminoacyl-tRNA to the A-site of ribosomes during protein biosynthesis. The polypeptide is Elongation factor Tu (Corynebacterium aurimucosum (strain ATCC 700975 / DSM 44827 / CIP 107346 / CN-1) (Corynebacterium nigricans)).